A 124-amino-acid polypeptide reads, in one-letter code: CRISPR-associated endoribonuclease Cas2 4 (124 aa).

Aspartate 40 is a binding site for Mg(2+).

This sequence belongs to the CRISPR-associated endoribonuclease Cas2 protein family. As to quaternary structure, homodimer, forms a heterotetramer with a Cas1 homodimer. Mg(2+) serves as cofactor.

Its function is as follows. CRISPR (clustered regularly interspaced short palindromic repeat), is an adaptive immune system that provides protection against mobile genetic elements (viruses, transposable elements and conjugative plasmids). CRISPR clusters contain sequences complementary to antecedent mobile elements and target invading nucleic acids. CRISPR clusters are transcribed and processed into CRISPR RNA (crRNA). Functions as a ssRNA-specific endoribonuclease. Involved in the integration of spacer DNA into the CRISPR cassette. In Rhodospirillum rubrum (strain ATCC 11170 / ATH 1.1.1 / DSM 467 / LMG 4362 / NCIMB 8255 / S1), this protein is CRISPR-associated endoribonuclease Cas2 4.